The following is a 116-amino-acid chain: NADH-ubiquinone oxidoreductase chain 3 (116 aa).

Helical transmembrane passes span 4–24 (LIIT…IAFW), 56–76 (FFLV…LLPL), and 88–108 (TLIL…YEWI).

This sequence belongs to the complex I subunit 3 family. As to quaternary structure, core subunit of respiratory chain NADH dehydrogenase (Complex I) which is composed of 45 different subunits. Interacts with TMEM186. Interacts with TMEM242.

It localises to the mitochondrion inner membrane. It carries out the reaction a ubiquinone + NADH + 5 H(+)(in) = a ubiquinol + NAD(+) + 4 H(+)(out). Functionally, core subunit of the mitochondrial membrane respiratory chain NADH dehydrogenase (Complex I) which catalyzes electron transfer from NADH through the respiratory chain, using ubiquinone as an electron acceptor. Essential for the catalytic activity of complex I. This chain is NADH-ubiquinone oxidoreductase chain 3, found in Didelphis virginiana (North American opossum).